A 76-amino-acid polypeptide reads, in one-letter code: MSWYEKYNIVLNPPKRCSFACADNLTTILAEDGNNIRAILYSQPKKLKILQDFLATSRNKMFLYKILDDEIRRVLT.

A disulfide bridge connects residues cysteine 17 and cysteine 21.

The protein belongs to the orthopoxvirus OPG128 family. As to quaternary structure, interacts with sulfhydryl oxidase OPG072; this interaction involves formation of a transient disulfide-bonded intermediate, allowing disulfide bond transfer. Interacts with OPG088; this interaction involves formation of a transient disulfide-bonded intermediate, allowing disulfide bond transfer.

Its function is as follows. Late protein which probably participates in disulfide bond formation by functioning as a thiol-disulfide transfer protein between membrane-associated OPG072 and OPG08. The complete pathway for formation of disulfide bonds in intracellular virion membrane proteins sequentially involves oxidation of OPG072, OPG128 and OPG08. The sequence is that of Protein OPG128 (OPG128) from Bos taurus (Bovine).